The primary structure comprises 91 residues: Non-specific lipid-transfer protein 1 (91 aa).

4 disulfide bridges follow: C3/C50, C13/C27, C28/C73, and C48/C87.

The protein belongs to the plant LTP family.

Plant non-specific lipid-transfer proteins transfer phospholipids as well as galactolipids across membranes. May play a role in wax or cutin deposition in the cell walls of expanding epidermal cells and certain secretory tissues. The protein is Non-specific lipid-transfer protein 1 of Prunus domestica (Garden plum).